Consider the following 798-residue polypeptide: Iron-regulated transcriptional activator AFT2 (798 aa).

Disordered regions lie at residues 142–274 (RSNK…KKLK), 331–365 (YPQP…QENN), 449–545 (NVDL…LPGS), 642–718 (QQQQ…NNIN), and 748–798 (QGNP…GPGW). Residues 153–165 (EIANTPSVTSYSP) show a composition bias toward polar residues. A compositionally biased stretch (low complexity) spans 193 to 223 (STQSTRSSSSSDGSSIVSFGSLTSQSSSTSL). Over residues 256–274 (PVKRKNMKANTMKKSKKLK) the composition is skewed to basic residues. The segment covering 449–460 (NVDLEQNGSNEN) has biased composition (polar residues). A compositionally biased stretch (low complexity) spans 476–517 (ENQFSYQSQIQNQRQNQNQNQGQNQNQNQSQSQTPGQNSNQN). Polar residues-rich tracts occupy residues 518-543 (DSQT…NWLP) and 646-656 (PMFSMQNSGQQ). 2 stretches are compositionally biased toward low complexity: residues 657–695 (LPPL…TLNP) and 705–718 (NSTN…NNIN). Polar residues predominate over residues 748 to 773 (QGNPTNSNQSMVNSIMTTNSNKDGTA). The span at 774-789 (TSNNNSSGNTSNNLLN) shows a compositional bias: low complexity.

The protein localises to the nucleus. Functionally, transcription factor involved in iron metabolism, oxidative stress, surface adhesion, hyphal development and virulence. Functions as a negative regulator of MRS4 expression through the CACCC AFT-type sequence in a gene dose-dependent fashion. Acts as a repressor in flocculation, plastic adhesion, and surface hydrophobicity. In Candida albicans (strain SC5314 / ATCC MYA-2876) (Yeast), this protein is Iron-regulated transcriptional activator AFT2 (AFT2).